The following is an 89-amino-acid chain: Small ribosomal subunit protein uS15 (89 aa).

It belongs to the universal ribosomal protein uS15 family. In terms of assembly, part of the 30S ribosomal subunit. Forms a bridge to the 50S subunit in the 70S ribosome, contacting the 23S rRNA.

In terms of biological role, one of the primary rRNA binding proteins, it binds directly to 16S rRNA where it helps nucleate assembly of the platform of the 30S subunit by binding and bridging several RNA helices of the 16S rRNA. Forms an intersubunit bridge (bridge B4) with the 23S rRNA of the 50S subunit in the ribosome. The protein is Small ribosomal subunit protein uS15 of Cupriavidus metallidurans (strain ATCC 43123 / DSM 2839 / NBRC 102507 / CH34) (Ralstonia metallidurans).